Consider the following 270-residue polypeptide: MVLLKEYRVILPVSVEEYQVGQLYSVAEASKNETGGGEGVEVLVNEPYEKDGEKGQYTHKIYHLQSKVPTFVRMLAPEGALNIHEKAWNAYPYCRTVITNEYMKEDFLIKIETWHKPDLGTLENVHKLEPEAWKHVEVIYIDIADRSQVLSKDYKAEEDPAKYKSIKTGRGPLGPNWKQELVNQKDCPYMCAYKLVTVKFKWWGLQNKVENFIHKQERRLFTNFHRQLFCWLDKWVDLTMDDIRRMEDETKRQLDEMRQKDPVKGMTADD.

6 residues coordinate a 1,2-diacyl-sn-glycero-3-phospho-(1D-myo-inositol): T58, K60, E85, N89, T96, and K194. The residue at position 215 (K215) is an N6-acetyllysine.

Belongs to the PtdIns transfer protein family. PI transfer class I subfamily. Post-translationally, phosphorylated by PKC in a calcium and phosphatidylserine-dependent manner.

It localises to the cytoplasm. It is found in the nucleus. The enzyme catalyses a 1,2-diacyl-sn-glycero-3-phosphocholine(in) = a 1,2-diacyl-sn-glycero-3-phosphocholine(out). The catalysed reaction is a 1,2-diacyl-sn-glycero-3-phospho-(1D-myo-inositol)(in) = a 1,2-diacyl-sn-glycero-3-phospho-(1D-myo-inositol)(out). Its function is as follows. Catalyzes the transfer of phosphatidylinositol (PI) and phosphatidylcholine (PC) between membranes. Shows a preference for PI and PC containing shorter saturated or monosaturated acyl chains at the sn-1 and sn-2 positions. Preference order for PC is C16:1 &gt; C16:0 &gt; C18:1 &gt; C18:0 &gt; C20:4 and for PI is C16:1 &gt; C16:0 &gt; C18:1 &gt; C18:0 &gt; C20:4 &gt; C20:3. This is Phosphatidylinositol transfer protein alpha isoform (PITPNA) from Bos taurus (Bovine).